The primary structure comprises 607 residues: Threonine--tRNA ligase (607 aa).

Positions Asp-200–Pro-502 are catalytic. Residues Cys-299, His-350, and His-479 each coordinate Zn(2+).

This sequence belongs to the class-II aminoacyl-tRNA synthetase family. As to quaternary structure, homodimer. Requires Zn(2+) as cofactor.

The protein resides in the cytoplasm. The enzyme catalyses tRNA(Thr) + L-threonine + ATP = L-threonyl-tRNA(Thr) + AMP + diphosphate + H(+). Functionally, catalyzes the attachment of threonine to tRNA(Thr) in a two-step reaction: L-threonine is first activated by ATP to form Thr-AMP and then transferred to the acceptor end of tRNA(Thr). Also edits incorrectly charged L-seryl-tRNA(Thr). The polypeptide is Threonine--tRNA ligase (Synechococcus sp. (strain ATCC 27144 / PCC 6301 / SAUG 1402/1) (Anacystis nidulans)).